Consider the following 68-residue polypeptide: Protein SlyX homolog (68 aa).

The protein belongs to the SlyX family.

This Brucella suis (strain ATCC 23445 / NCTC 10510) protein is Protein SlyX homolog.